A 343-amino-acid chain; its full sequence is N-acetyl-gamma-glutamyl-phosphate reductase (343 aa).

The active site involves Cys-147.

The protein belongs to the NAGSA dehydrogenase family. Type 1 subfamily.

Its subcellular location is the cytoplasm. It catalyses the reaction N-acetyl-L-glutamate 5-semialdehyde + phosphate + NADP(+) = N-acetyl-L-glutamyl 5-phosphate + NADPH + H(+). Its pathway is amino-acid biosynthesis; L-arginine biosynthesis; N(2)-acetyl-L-ornithine from L-glutamate: step 3/4. Its function is as follows. Catalyzes the NADPH-dependent reduction of N-acetyl-5-glutamyl phosphate to yield N-acetyl-L-glutamate 5-semialdehyde. In Listeria monocytogenes serotype 4a (strain HCC23), this protein is N-acetyl-gamma-glutamyl-phosphate reductase.